The following is a 103-amino-acid chain: Large ribosomal subunit protein bL21 (103 aa).

The protein belongs to the bacterial ribosomal protein bL21 family. As to quaternary structure, part of the 50S ribosomal subunit. Contacts protein L20.

This protein binds to 23S rRNA in the presence of protein L20. The polypeptide is Large ribosomal subunit protein bL21 (Acidovorax ebreus (strain TPSY) (Diaphorobacter sp. (strain TPSY))).